We begin with the raw amino-acid sequence, 117 residues long: UPF0251 protein cbdbA217 (117 aa).

It belongs to the UPF0251 family.

This chain is UPF0251 protein cbdbA217, found in Dehalococcoides mccartyi (strain CBDB1).